The following is a 72-amino-acid chain: Cold shock-like protein CspD (72 aa).

A CSD domain is found at 4–64 (GIVKWFNNAK…SDKGSHATKI (61 aa)).

It is found in the cytoplasm. This is Cold shock-like protein CspD (cspD) from Haemophilus influenzae (strain ATCC 51907 / DSM 11121 / KW20 / Rd).